Reading from the N-terminus, the 1388-residue chain is Kinesin-like protein KIF15-A (1388 aa).

The Kinesin motor domain maps to 26 to 364; that stretch reads AIKVFVRIRP…LQFAQRAKLI (339 aa). ATP is bound at residue 110–117; that stretch reads GQTGSGKT. Positions 369–1383 form a coiled coil; it reads VVNEDTQGNV…ENLFLKESKK (1015 aa). Positions 1127–1156 are disordered; it reads EQEKIRPASSNSSSPVVLPETPRTPEGNPY. Residues 1139 to 1388 form a necessary for its targeting to microtubule minus ends region; sequence SSPVVLPETP…KESKKCEHCN (250 aa).

The protein belongs to the TRAFAC class myosin-kinesin ATPase superfamily. Kinesin family. KLP2 subfamily. In terms of assembly, homodimer. Dimerization is required for targeting to microtubule minus ends. Found in a complex with tpx2 and microtubules. Its association with microtubules and targeting to microtubule minus ends requires tpx2. As to expression, strongly expressed in testis and weakly in lung (at protein level).

It is found in the cytoplasm. Its subcellular location is the cytoskeleton. The protein resides in the microtubule organizing center. It localises to the centrosome. The protein localises to the spindle. It is found in the spindle pole. In terms of biological role, plus-end directed kinesin-like motor enzyme involved in mitotic spindle assembly. Required for centrosome separation and maintenance of spindle bipolarity during mitosis. The protein is Kinesin-like protein KIF15-A (kif15-a) of Xenopus laevis (African clawed frog).